We begin with the raw amino-acid sequence, 289 residues long: 7-methylguanosine phosphate-specific 5'-nucleotidase (289 aa).

The Nucleophile role is filled by aspartate 38. The Mg(2+) site is built by aspartate 38 and aspartate 40. Aspartate 40 acts as the Proton donor in catalysis. Position 85 (glutamate 85) interacts with CMP. Glutamate 85 contacts N(7)-methyl-GMP. Substrate contacts are provided by residues 153–154 and lysine 202; that span reads SA. Aspartate 227 is a Mg(2+) binding site.

This sequence belongs to the pyrimidine 5'-nucleotidase family. In terms of assembly, monomer.

The protein resides in the cytoplasm. It carries out the reaction N(7)-methyl-GMP + H2O = N(7)-methylguanosine + phosphate. The catalysed reaction is CMP + H2O = cytidine + phosphate. It catalyses the reaction a ribonucleoside 5'-phosphate + H2O = a ribonucleoside + phosphate. Specifically hydrolyzes 7-methylguanosine monophosphate (m(7)GMP) to 7-methylguanosine and inorganic phosphate. The specific activity for m(7)GMP may protect cells against undesired salvage of m(7)GMP and its incorporation into nucleic acids. Also has weak activity for CMP. UMP and purine nucleotides are poor substrates. In Gallus gallus (Chicken), this protein is 7-methylguanosine phosphate-specific 5'-nucleotidase (NT5C3B).